The primary structure comprises 494 residues: Guanosine-5'-triphosphate,3'-diphosphate pyrophosphatase (494 aa).

Belongs to the GppA/Ppx family. GppA subfamily.

The enzyme catalyses guanosine 3'-diphosphate 5'-triphosphate + H2O = guanosine 3',5'-bis(diphosphate) + phosphate + H(+). The protein operates within purine metabolism; ppGpp biosynthesis; ppGpp from GTP: step 2/2. Its function is as follows. Catalyzes the conversion of pppGpp to ppGpp. Guanosine pentaphosphate (pppGpp) is a cytoplasmic signaling molecule which together with ppGpp controls the 'stringent response', an adaptive process that allows bacteria to respond to amino acid starvation, resulting in the coordinated regulation of numerous cellular activities. The sequence is that of Guanosine-5'-triphosphate,3'-diphosphate pyrophosphatase from Shigella sonnei (strain Ss046).